The chain runs to 242 residues: Probable 2-phosphosulfolactate phosphatase (242 aa).

Belongs to the ComB family. The cofactor is Mg(2+).

It carries out the reaction (2R)-O-phospho-3-sulfolactate + H2O = (2R)-3-sulfolactate + phosphate. In Picosynechococcus sp. (strain ATCC 27264 / PCC 7002 / PR-6) (Agmenellum quadruplicatum), this protein is Probable 2-phosphosulfolactate phosphatase.